The following is a 381-amino-acid chain: Cobalt-precorrin-5B C(1)-methyltransferase (381 aa).

Belongs to the CbiD family.

It catalyses the reaction Co-precorrin-5B + S-adenosyl-L-methionine = Co-precorrin-6A + S-adenosyl-L-homocysteine. Its pathway is cofactor biosynthesis; adenosylcobalamin biosynthesis; cob(II)yrinate a,c-diamide from sirohydrochlorin (anaerobic route): step 6/10. Catalyzes the methylation of C-1 in cobalt-precorrin-5B to form cobalt-precorrin-6A. The protein is Cobalt-precorrin-5B C(1)-methyltransferase of Clostridium botulinum (strain Alaska E43 / Type E3).